We begin with the raw amino-acid sequence, 267 residues long: Glutamate racemase (267 aa).

Substrate-binding positions include 13–14 and 45–46; these read DS and YS. The Proton donor/acceptor role is filled by Cys77. Position 78 to 79 (78 to 79) interacts with substrate; that stretch reads NT. The active-site Proton donor/acceptor is the Cys188. A substrate-binding site is contributed by 189–190; it reads TH.

The protein belongs to the aspartate/glutamate racemases family.

It carries out the reaction L-glutamate = D-glutamate. The protein operates within cell wall biogenesis; peptidoglycan biosynthesis. Its function is as follows. Provides the (R)-glutamate required for cell wall biosynthesis. The protein is Glutamate racemase of Histophilus somni (strain 2336) (Haemophilus somnus).